Here is a 224-residue protein sequence, read N- to C-terminus: MLDSPKLTARQQQILDLIQTAIARTGAPPTRAEIAAELGFKSANAAEEHLQALARKGVIELVSGTSRGIRLRGETVRNINAARGAQFNLPIPGLSQLTLPLVGRVAAGSPILAQEHVDQTYTVEGSLFAHKPDYLLKVRGMSMRDAGIMDGDLLAVQATREARNGQIIVARLGDDVTVKRLRRTGSAIELLPENPDYPVIRVEPGEPFEIEGLAVGLIRNTMLM.

A DNA-binding region (H-T-H motif) is located at residues 31–51 (RAEIAAELGFKSANAAEEHLQ). Active-site for autocatalytic cleavage activity residues include serine 142 and lysine 179.

This sequence belongs to the peptidase S24 family. In terms of assembly, homodimer.

The enzyme catalyses Hydrolysis of Ala-|-Gly bond in repressor LexA.. Its function is as follows. Represses a number of genes involved in the response to DNA damage (SOS response), including recA and lexA. In the presence of single-stranded DNA, RecA interacts with LexA causing an autocatalytic cleavage which disrupts the DNA-binding part of LexA, leading to derepression of the SOS regulon and eventually DNA repair. In Acidovorax ebreus (strain TPSY) (Diaphorobacter sp. (strain TPSY)), this protein is LexA repressor.